Reading from the N-terminus, the 431-residue chain is Histidinol dehydrogenase (431 aa).

NAD(+) is bound by residues Tyr124, Gln187, and Asn210. The substrate site is built by Ser236, Gln258, and His261. Zn(2+)-binding residues include Gln258 and His261. Catalysis depends on proton acceptor residues Glu325 and His326. 4 residues coordinate substrate: His326, Asp359, Glu413, and His418. Zn(2+) is bound at residue Asp359. A Zn(2+)-binding site is contributed by His418.

It belongs to the histidinol dehydrogenase family. Requires Zn(2+) as cofactor.

The enzyme catalyses L-histidinol + 2 NAD(+) + H2O = L-histidine + 2 NADH + 3 H(+). Its pathway is amino-acid biosynthesis; L-histidine biosynthesis; L-histidine from 5-phospho-alpha-D-ribose 1-diphosphate: step 9/9. Functionally, catalyzes the sequential NAD-dependent oxidations of L-histidinol to L-histidinaldehyde and then to L-histidine. In Legionella pneumophila subsp. pneumophila (strain Philadelphia 1 / ATCC 33152 / DSM 7513), this protein is Histidinol dehydrogenase.